We begin with the raw amino-acid sequence, 239 residues long: 4-hydroxy-tetrahydrodipicolinate reductase (239 aa).

NAD(+) contacts are provided by residues 8–13, 78–80, and 102–105; these read GSTGKM, GTT, and SANM. Histidine 134 serves as the catalytic Proton donor/acceptor. Residue histidine 135 participates in (S)-2,3,4,5-tetrahydrodipicolinate binding. Lysine 138 acts as the Proton donor in catalysis. 144–145 is a binding site for (S)-2,3,4,5-tetrahydrodipicolinate; that stretch reads GT.

Belongs to the DapB family.

The protein resides in the cytoplasm. The enzyme catalyses (S)-2,3,4,5-tetrahydrodipicolinate + NAD(+) + H2O = (2S,4S)-4-hydroxy-2,3,4,5-tetrahydrodipicolinate + NADH + H(+). It carries out the reaction (S)-2,3,4,5-tetrahydrodipicolinate + NADP(+) + H2O = (2S,4S)-4-hydroxy-2,3,4,5-tetrahydrodipicolinate + NADPH + H(+). It participates in amino-acid biosynthesis; L-lysine biosynthesis via DAP pathway; (S)-tetrahydrodipicolinate from L-aspartate: step 4/4. In terms of biological role, catalyzes the conversion of 4-hydroxy-tetrahydrodipicolinate (HTPA) to tetrahydrodipicolinate. This is 4-hydroxy-tetrahydrodipicolinate reductase from Rickettsia africae (strain ESF-5).